The primary structure comprises 455 residues: Argininosuccinate lyase (455 aa).

Belongs to the lyase 1 family. Argininosuccinate lyase subfamily.

The protein resides in the cytoplasm. The catalysed reaction is 2-(N(omega)-L-arginino)succinate = fumarate + L-arginine. It participates in amino-acid biosynthesis; L-arginine biosynthesis; L-arginine from L-ornithine and carbamoyl phosphate: step 3/3. This is Argininosuccinate lyase from Shewanella baltica (strain OS223).